A 109-amino-acid chain; its full sequence is Nucleoid-associated protein HS_1309 (109 aa).

It belongs to the YbaB/EbfC family. Homodimer.

The protein localises to the cytoplasm. The protein resides in the nucleoid. Functionally, binds to DNA and alters its conformation. May be involved in regulation of gene expression, nucleoid organization and DNA protection. This Histophilus somni (strain 129Pt) (Haemophilus somnus) protein is Nucleoid-associated protein HS_1309.